The following is a 665-amino-acid chain: Fermitin family homolog 3 (665 aa).

Residue Tyr11 is modified to Phosphotyrosine. The region spanning 229–556 is the FERM domain; it reads WLDSSRCLMQ…SLPDFGISYV (328 aa). The region spanning 354–453 is the PH domain; the sequence is DHLRIFRPRK…WMAGCRLASK (100 aa). At Tyr502 the chain carries Phosphotyrosine. Thr589 carries the phosphothreonine modification.

Belongs to the kindlin family. As to quaternary structure, interacts with ITGB1, ITGB2 and ITGB3 (via cytoplasmic tails).

Its subcellular location is the cell projection. The protein localises to the podosome. In terms of biological role, plays a central role in cell adhesion in hematopoietic cells. Acts by activating the integrin beta-1-3 (ITGB1, ITGB2 and ITGB3). Required for integrin-mediated platelet adhesion and leukocyte adhesion to endothelial cells. Required for activation of integrin beta-2 (ITGB2) in polymorphonuclear granulocytes (PMNs). This Bos taurus (Bovine) protein is Fermitin family homolog 3 (FERMT3).